The chain runs to 320 residues: 4-hydroxy-3-methylbut-2-enyl diphosphate reductase (320 aa).

Cys-13 contributes to the [4Fe-4S] cluster binding site. Positions 41 and 75 each coordinate (2E)-4-hydroxy-3-methylbut-2-enyl diphosphate. Residues His-41 and His-75 each coordinate dimethylallyl diphosphate. 2 residues coordinate isopentenyl diphosphate: His-41 and His-75. Residue Cys-97 participates in [4Fe-4S] cluster binding. His-125 is a (2E)-4-hydroxy-3-methylbut-2-enyl diphosphate binding site. His-125 is a dimethylallyl diphosphate binding site. Position 125 (His-125) interacts with isopentenyl diphosphate. Glu-127 acts as the Proton donor in catalysis. Thr-168 contributes to the (2E)-4-hydroxy-3-methylbut-2-enyl diphosphate binding site. Residue Cys-225 participates in [4Fe-4S] cluster binding. Ser-253, Ser-254, Asn-255, and Ser-302 together coordinate (2E)-4-hydroxy-3-methylbut-2-enyl diphosphate. Positions 253, 254, 255, and 302 each coordinate dimethylallyl diphosphate. Positions 253, 254, 255, and 302 each coordinate isopentenyl diphosphate.

Belongs to the IspH family. The cofactor is [4Fe-4S] cluster.

The catalysed reaction is isopentenyl diphosphate + 2 oxidized [2Fe-2S]-[ferredoxin] + H2O = (2E)-4-hydroxy-3-methylbut-2-enyl diphosphate + 2 reduced [2Fe-2S]-[ferredoxin] + 2 H(+). It carries out the reaction dimethylallyl diphosphate + 2 oxidized [2Fe-2S]-[ferredoxin] + H2O = (2E)-4-hydroxy-3-methylbut-2-enyl diphosphate + 2 reduced [2Fe-2S]-[ferredoxin] + 2 H(+). It participates in isoprenoid biosynthesis; dimethylallyl diphosphate biosynthesis; dimethylallyl diphosphate from (2E)-4-hydroxy-3-methylbutenyl diphosphate: step 1/1. It functions in the pathway isoprenoid biosynthesis; isopentenyl diphosphate biosynthesis via DXP pathway; isopentenyl diphosphate from 1-deoxy-D-xylulose 5-phosphate: step 6/6. In terms of biological role, catalyzes the conversion of 1-hydroxy-2-methyl-2-(E)-butenyl 4-diphosphate (HMBPP) into a mixture of isopentenyl diphosphate (IPP) and dimethylallyl diphosphate (DMAPP). Acts in the terminal step of the DOXP/MEP pathway for isoprenoid precursor biosynthesis. In Chlorobium luteolum (strain DSM 273 / BCRC 81028 / 2530) (Pelodictyon luteolum), this protein is 4-hydroxy-3-methylbut-2-enyl diphosphate reductase.